A 312-amino-acid chain; its full sequence is Protoheme IX farnesyltransferase (312 aa).

8 helical membrane-spanning segments follow: residues 34 to 54 (LVIF…HPVL), 56 to 76 (FTAI…NMAL), 119 to 139 (ALVN…YVVI), 152 to 172 (IVIG…AATG), 179 to 199 (LLLF…LALF), 225 to 245 (ILLY…LGYF), 247 to 267 (WVYG…AINV), and 283 to 303 (LFAF…LDVL).

Belongs to the UbiA prenyltransferase family. Protoheme IX farnesyltransferase subfamily.

Its subcellular location is the cell inner membrane. It catalyses the reaction heme b + (2E,6E)-farnesyl diphosphate + H2O = Fe(II)-heme o + diphosphate. It functions in the pathway porphyrin-containing compound metabolism; heme O biosynthesis; heme O from protoheme: step 1/1. Converts heme B (protoheme IX) to heme O by substitution of the vinyl group on carbon 2 of heme B porphyrin ring with a hydroxyethyl farnesyl side group. In Nitrobacter hamburgensis (strain DSM 10229 / NCIMB 13809 / X14), this protein is Protoheme IX farnesyltransferase.